Reading from the N-terminus, the 599-residue chain is Adenine deaminase (599 aa).

This sequence belongs to the metallo-dependent hydrolases superfamily. Adenine deaminase family. Mn(2+) is required as a cofactor.

It carries out the reaction adenine + H2O + H(+) = hypoxanthine + NH4(+). The polypeptide is Adenine deaminase (Clostridium botulinum (strain Langeland / NCTC 10281 / Type F)).